The sequence spans 397 residues: UDP-GlcNAc:betaGal beta-1,3-N-acetylglucosaminyltransferase 7 (397 aa).

At 1-6 (MSLWKK) the chain is on the cytoplasmic side. Residues 7–26 (TLYKSVCLALALLVAVTVFQ) form a helical membrane-spanning segment. Topologically, residues 27 to 397 (RSVTPGQFLQ…LTCSVKFQVL (371 aa)) are lumenal. N-linked (GlcNAc...) asparagine glycosylation is found at Asn-84, Asn-90, Asn-210, and Asn-387.

Belongs to the glycosyltransferase 31 family. Strongly expressed in placenta and colon. Moderately expressed in lung, stomach, small intestine and kidney. Very weakly expressed in cerebrum, cerebellum, heart and testis.

Its subcellular location is the golgi apparatus membrane. The protein operates within protein modification; protein glycosylation. In terms of biological role, N-acetyl glucosamine (GlcNAc) transferase that catalyzes the transfer of GlcNAc via a beta1-&gt;3 linkage from UDP-GlcNAc to the non-reducing terminal galactose (Gal) in the linearly growing chain of N- and O-linked keratan sulfate proteoglycans. Cooperates with B4GALT4 galactosyltransferase and CHST6 and CHST1 sulfotransferases to construct and elongate mono- and disulfated disaccharide units [-&gt;3Galbeta1-&gt;4(6-sulfoGlcNAcbeta)1-&gt;] and [-&gt;3(6-sulfoGalbeta)1-&gt;4(6-sulfoGlcNAcbeta)1-&gt;] within keratan sulfate polymer. Involved in biosynthesis of N-linked keratan sulfate proteoglycans in cornea, with an impact on proteoglycan fibril organization and corneal transparency. May play a role in the maintenance of tissue architecture by suppressing cellular motility and invasion. The polypeptide is UDP-GlcNAc:betaGal beta-1,3-N-acetylglucosaminyltransferase 7 (B3gnt7) (Mus musculus (Mouse)).